Consider the following 300-residue polypeptide: MSYRELVVELAREHAEALSDALLELGALSVSVEDADADTPDEQPLFGEPGLVPDRTAWQHSRVVALLAADHEPAVLLAAAANEIGVAETPAFTVREVEEQDWVRLTQSQFEPIPIGERIWVVPSWHDAPDPDALILELDPGLAFGTGSHPTTRLCMEWLEQSVKPGQSVLDYGCGSGILAILAKKCGANPVIGIDIDPQAVESARQNSERNHADVTYGLPDACPDGEFDIVVANILSNPLKLMASMLASKVKPGGRIALSGVLARQADEVAAVYARYVDISVWREHEGWVCLAGTRRESH.

S-adenosyl-L-methionine is bound by residues Thr-152, Gly-173, Asp-195, and Asn-234.

This sequence belongs to the methyltransferase superfamily. PrmA family.

Its subcellular location is the cytoplasm. The enzyme catalyses L-lysyl-[protein] + 3 S-adenosyl-L-methionine = N(6),N(6),N(6)-trimethyl-L-lysyl-[protein] + 3 S-adenosyl-L-homocysteine + 3 H(+). In terms of biological role, methylates ribosomal protein L11. The sequence is that of Ribosomal protein L11 methyltransferase from Burkholderia lata (strain ATCC 17760 / DSM 23089 / LMG 22485 / NCIMB 9086 / R18194 / 383).